Reading from the N-terminus, the 429-residue chain is Enolase (429 aa).

Q163 lines the (2R)-2-phosphoglycerate pocket. The Proton donor role is filled by E205. D242, E285, and D312 together coordinate Mg(2+). 4 residues coordinate (2R)-2-phosphoglycerate: K337, R366, S367, and K388. K337 (proton acceptor) is an active-site residue.

The protein belongs to the enolase family. It depends on Mg(2+) as a cofactor.

Its subcellular location is the cytoplasm. It is found in the secreted. It localises to the cell surface. The catalysed reaction is (2R)-2-phosphoglycerate = phosphoenolpyruvate + H2O. It participates in carbohydrate degradation; glycolysis; pyruvate from D-glyceraldehyde 3-phosphate: step 4/5. Catalyzes the reversible conversion of 2-phosphoglycerate (2-PG) into phosphoenolpyruvate (PEP). It is essential for the degradation of carbohydrates via glycolysis. In Methylorubrum extorquens (strain PA1) (Methylobacterium extorquens), this protein is Enolase.